A 695-amino-acid chain; its full sequence is Testis-specific Y-encoded-like protein 2 (695 aa).

The disordered stretch occupies residues 1-56 (MDRPDEGPPAKTRRLSSSESPQRDPPPPPPPPPLLRLPLPPPQQRPRLQEETEAAQ). A Glycyl lysine isopeptide (Lys-Gly) (interchain with G-Cter in SUMO2) cross-link involves residue K11. S18 and S20 each carry phosphoserine. A compositionally biased stretch (pro residues) spans 23 to 44 (RDPPPPPPPPPLLRLPLPPPQQ). Glycyl lysine isopeptide (Lys-Gly) (interchain with G-Cter in SUMO2) cross-links involve residues K163 and K165. The segment at 175–207 (EDEDEQESMRSSRRRRRRRRRKQRKVKRESRQR) is disordered. Residues 185 to 202 (SSRRRRRRRRRKQRKVKR) are compositionally biased toward basic residues. A Phosphothreonine modification is found at T340. 2 disordered regions span residues 471 to 603 (DINE…RDIE) and 632 to 695 (VEEE…GKTG). The span at 481–491 (SPDHDEVRNET) shows a compositional bias: basic and acidic residues. Residues 496–518 (ESADDNETTDNNESADDNNENPE) are compositionally biased toward acidic residues. Positions 519–535 (DNNKNADDNKENPDNNK) are enriched in basic and acidic residues. Over residues 539-557 (GNNFFNGGFWGSHGNNQDS) the composition is skewed to low complexity. Composition is skewed to acidic residues over residues 558–601 (SDSD…DDRD) and 632–677 (VEEE…DLED). S670 and S673 each carry phosphoserine.

It belongs to the nucleosome assembly protein (NAP) family. Interacts with histones. Interacts with CASK. Part of a complex containing CASK, TBR1 and TSPYL2. Post-translationally, phosphorylation at Ser-20 and/or Thr-340 impairs function on cell proliferation. In terms of tissue distribution, ubiquitously expressed, with highest levels in testis, adrenal gland, cerebral cortex, ovary, skeletal muscle and spleen. Present in testis, adrenal gland, cerebral cortex and ovary (at protein level).

The protein resides in the nucleus. The protein localises to the cytoplasm. Functionally, part of the CASK/TBR1/TSPYL2 transcriptional complex which modulates gene expression in response to neuronal synaptic activity, probably by facilitating nucleosome assembly. May inhibit cell proliferation by inducing p53-dependent CDKN1A expression. This chain is Testis-specific Y-encoded-like protein 2 (TSPYL2), found in Macaca fascicularis (Crab-eating macaque).